The sequence spans 324 residues: MDAVLLEHFPGGLDTFPSPYFDEEDFFTDQSSRDPLEDSDELLGDEQAEVEFLSHQLHEYCYRDGACLLLQPAPSAAPHALAPPPLGDPGEPEDNVSYCCDAGAPLAAFPYSPGSPPSCLAYPCAAVLSPGARLGGLNGAAAAAAARRRRRVRSEAELQQLRQAANVRERRRMQSINDAFEGLRSHIPTLPYEKRLSKVDTLRLAIGYINFLSELVQADLPLRGSGAGGCGGPGGSRHLGEDSPGNQAQKVIICHRGTRSPSPSDPDYGLPPLAGHSLSWTDEKQLKEQNIIRTAKVWTPEDPRKLNSKSFDNIENEPPFEFVS.

The bHLH domain maps to 160–212 (QLRQAANVRERRRMQSINDAFEGLRSHIPTLPYEKRLSKVDTLRLAIGYINFL). Positions 302–324 (DPRKLNSKSFDNIENEPPFEFVS) are disordered.

Component of the pancreas transcription factor 1 complex (PTF1) which is composed of TCF3/p75, TCF12/p64 and PTF1A/p48. TCF3 is responsible for the nuclear import of the p48/p64 complex. Interacts with TCF3 and RBPSUH/RBP-Jkappa. In terms of tissue distribution, expressed in precursors of pancreatic islets, acini and ducts.

The protein resides in the nucleus. The protein localises to the cytoplasm. Functionally, transcription factor implicated in the cell fate determination in various organs. Binds to the E-box consensus sequence 5'-CANNTG-3'. Plays a role in early and late pancreas development and differentiation. Important for determining whether cells allocated to the pancreatic buds continue towards pancreatic organogenesis or revert back to duodenal fates. May be involved in the maintenance of exocrine pancreas-specific gene expression including ELA1 and amylase. Required for the formation of pancreatic acinar and ductal cells. Plays an important role in cerebellar development. Directly regulated by FOXN4 and RORC during retinal development, FOXN4-PTF1A pathway plays a central role in directing the differentiation of retinal progenitors towards horizontal and amacrine fates. The protein is Pancreas transcription factor 1 subunit alpha (Ptf1a) of Mus musculus (Mouse).